The following is a 115-amino-acid chain: NADH-ubiquinone oxidoreductase chain 3 (115 aa).

3 helical membrane passes run Leu-5–Pro-25, Phe-55–Leu-75, and Leu-86–Trp-106.

This sequence belongs to the complex I subunit 3 family. Core subunit of respiratory chain NADH dehydrogenase (Complex I) which is composed of 45 different subunits. Interacts with TMEM186. Interacts with TMEM242.

The protein localises to the mitochondrion inner membrane. It catalyses the reaction a ubiquinone + NADH + 5 H(+)(in) = a ubiquinol + NAD(+) + 4 H(+)(out). Functionally, core subunit of the mitochondrial membrane respiratory chain NADH dehydrogenase (Complex I) which catalyzes electron transfer from NADH through the respiratory chain, using ubiquinone as an electron acceptor. Essential for the catalytic activity of complex I. The chain is NADH-ubiquinone oxidoreductase chain 3 from Avahi cleesei (Cleese's woolly lemur).